The sequence spans 316 residues: Probable cell division protein WhiA (316 aa).

Positions 275 to 309 form a DNA-binding region, H-T-H motif; the sequence is TLKELGEMVESGKISKSGINHRLRKLDQIAEQLRN.

It belongs to the WhiA family.

Its function is as follows. Involved in cell division and chromosome segregation. The protein is Probable cell division protein WhiA of Bacillus pumilus (strain SAFR-032).